The primary structure comprises 100 residues: Ferredoxin (100 aa).

A propeptide spanning residues 1–8 is cleaved from the precursor; the sequence is MLSQVCRF. Residues 9–100 form the 2Fe-2S ferredoxin-type domain; it reads GTITAVKGGV…GENDGAVFEL (92 aa). Cys46, Cys52, Cys55, and Cys85 together coordinate [2Fe-2S] cluster.

The cofactor is [2Fe-2S] cluster.

The protein localises to the hydrogenosome. Ferredoxins are iron-sulfur proteins that transfer electrons in a wide variety of metabolic reactions. It links pyruvate:ferredoxin oxidoreductase to hydrogenase. This chain is Ferredoxin, found in Trichomonas vaginalis.